The sequence spans 89 residues: Small ribosomal subunit protein uS15 (89 aa).

A disordered region spans residues 1–25 (MSLDTTEKQQLINTHQTHGTDTGSA). A compositionally biased stretch (polar residues) spans 8–25 (KQQLINTHQTHGTDTGSA).

Belongs to the universal ribosomal protein uS15 family. As to quaternary structure, part of the 30S ribosomal subunit. Forms a bridge to the 50S subunit in the 70S ribosome, contacting the 23S rRNA.

Functionally, one of the primary rRNA binding proteins, it binds directly to 16S rRNA where it helps nucleate assembly of the platform of the 30S subunit by binding and bridging several RNA helices of the 16S rRNA. Forms an intersubunit bridge (bridge B4) with the 23S rRNA of the 50S subunit in the ribosome. This Synechococcus sp. (strain CC9605) protein is Small ribosomal subunit protein uS15.